Consider the following 689-residue polypeptide: Glycine--tRNA ligase beta subunit (689 aa).

The protein belongs to the class-II aminoacyl-tRNA synthetase family. As to quaternary structure, tetramer of two alpha and two beta subunits.

It is found in the cytoplasm. The enzyme catalyses tRNA(Gly) + glycine + ATP = glycyl-tRNA(Gly) + AMP + diphosphate. This Shewanella baltica (strain OS185) protein is Glycine--tRNA ligase beta subunit.